The primary structure comprises 212 residues: Large ribosomal subunit protein bL25 (212 aa).

The interval 190-212 is disordered; it reads IAEAGDALAEPEVISKGSGEADE.

The protein belongs to the bacterial ribosomal protein bL25 family. CTC subfamily. As to quaternary structure, part of the 50S ribosomal subunit; part of the 5S rRNA/L5/L18/L25 subcomplex. Contacts the 5S rRNA. Binds to the 5S rRNA independently of L5 and L18.

This is one of the proteins that binds to the 5S RNA in the ribosome where it forms part of the central protuberance. In Rhodopirellula baltica (strain DSM 10527 / NCIMB 13988 / SH1), this protein is Large ribosomal subunit protein bL25.